A 473-amino-acid polypeptide reads, in one-letter code: Ribulose bisphosphate carboxylase large chain (473 aa).

Substrate is bound by residues N116 and T166. K168 serves as the catalytic Proton acceptor. Residue K170 coordinates substrate. Mg(2+)-binding residues include K194, D196, and E197. K194 is modified (N6-carboxylysine). The active-site Proton acceptor is H287. Substrate-binding residues include R288, H320, and S372.

Belongs to the RuBisCO large chain family. Type I subfamily. As to quaternary structure, heterohexadecamer of 8 large chains and 8 small chains. The cofactor is Mg(2+).

It carries out the reaction 2 (2R)-3-phosphoglycerate + 2 H(+) = D-ribulose 1,5-bisphosphate + CO2 + H2O. The enzyme catalyses D-ribulose 1,5-bisphosphate + O2 = 2-phosphoglycolate + (2R)-3-phosphoglycerate + 2 H(+). Functionally, ruBisCO catalyzes two reactions: the carboxylation of D-ribulose 1,5-bisphosphate, the primary event in carbon dioxide fixation, as well as the oxidative fragmentation of the pentose substrate. Both reactions occur simultaneously and in competition at the same active site. The sequence is that of Ribulose bisphosphate carboxylase large chain from Rhodobacter capsulatus (strain ATCC BAA-309 / NBRC 16581 / SB1003).